Reading from the N-terminus, the 381-residue chain is MAAGSASSLGGGSWPGSEAGDFLARYRQVSNKLKKRFLRKPNVAEAGEQFAQLARELRAQECLPYAAWCQLAVARCQQALFHGPGEALALTEAARLFLRQECDARQRLGCPAAYGEPLQAAASALGAAVRLHLELGQPAAAAALCLELAAALRAVGQPAAAAGHFQRAAQLHLPLMPLAALQALGDAASCQLLARDYTGALAVFTRMQRLAREHGGHPVQQPELPQQLPSVPQPSLPGPQPRPVLGSTLPLPLPPDHAPGSVAQSPGTLGAFADVLVRCEVSRVLLLLLLQPPPAKLLPEHAQTLEKYSWEAFDGHGQDSSGQLPEELFLLLQSLVMAAHEKDTEGIKKLQVEMWPLLTAEQNHLLHLVLQETISPSGQGV.

Alanine 2 carries the post-translational modification N-acetylalanine. A Nuclear localization signal motif is present at residues lysine 34 to arginine 36. Residues glutamate 213–glycine 260 form a disordered region. Residues proline 218–serine 230 show a composition bias toward low complexity. The span at valine 231–arginine 242 shows a compositional bias: pro residues.

Interacts with HTT (via C-terminus). Interacts with RAB5A. Found in a complex with F8A1/F8A2/F8A3, HTT and RAB5A; mediates the recruitment of HTT by RAB5A onto early endosomes.

The protein localises to the cytoplasm. The protein resides in the nucleus. Its subcellular location is the early endosome. It is found in the nuclear body. In terms of biological role, RAB5A effector molecule that is involved in vesicular trafficking of early endosomes. Mediates the recruitment of HTT by RAB5A onto early endosomes. The HTT-F8A1/F8A2/F8A3-RAB5A complex stimulates early endosomal interaction with actin filaments and inhibits interaction with microtubules, leading to the reduction of endosome motility. The chain is 40-kDa huntingtin-associated protein (F8a1) from Rattus norvegicus (Rat).